We begin with the raw amino-acid sequence, 309 residues long: Homoserine O-succinyltransferase (309 aa).

The active-site Acyl-thioester intermediate is cysteine 142. Residues lysine 163 and serine 192 each contribute to the substrate site. Residue histidine 235 is the Proton acceptor of the active site. Residue glutamate 237 is part of the active site. A substrate-binding site is contributed by arginine 249.

The protein belongs to the MetA family. As to quaternary structure, homodimer.

Its subcellular location is the cytoplasm. The catalysed reaction is L-homoserine + succinyl-CoA = O-succinyl-L-homoserine + CoA. It functions in the pathway amino-acid biosynthesis; L-methionine biosynthesis via de novo pathway; O-succinyl-L-homoserine from L-homoserine: step 1/1. Functionally, transfers a succinyl group from succinyl-CoA to L-homoserine, forming succinyl-L-homoserine. The polypeptide is Homoserine O-succinyltransferase (Escherichia coli O157:H7).